Consider the following 485-residue polypeptide: Calcium-dependent protein kinase 27 (485 aa).

The N-myristoyl glycine moiety is linked to residue Gly2. A Protein kinase domain is found at 28–290 (YILGEELGRG…AAEVLGHPWM (263 aa)). Residues 34 to 42 (LGRGNFGLT) and Lys57 contribute to the ATP site. The active-site Proton acceptor is Asp156. Phosphoserine is present on Ser196. An autoinhibitory domain region spans residues 295–325 (ASDKPIDGVVLSRLKRFRDANKFKKVVLKFI). EF-hand domains lie at 332-367 (EEIK…LGSN), 368-403 (LSKT…RYKL), 404-439 (DRDE…DGAG), and 444-474 (IKQI…ESSL). Residues Asp345, Asp347, Ser349, Asn351, Glu356, Asp381, Asp383, Asn385, Thr387, Glu392, Asp417, Asp419, Asp421, His423, Glu428, Asp452, Asp454, Asp456, Lys458, and Glu463 each contribute to the Ca(2+) site.

It belongs to the protein kinase superfamily. Ser/Thr protein kinase family. CDPK subfamily.

It localises to the membrane. The enzyme catalyses L-seryl-[protein] + ATP = O-phospho-L-seryl-[protein] + ADP + H(+). It carries out the reaction L-threonyl-[protein] + ATP = O-phospho-L-threonyl-[protein] + ADP + H(+). With respect to regulation, activated by calcium. Autophosphorylation may play an important role in the regulation of the kinase activity. Its function is as follows. May play a role in signal transduction pathways that involve calcium as a second messenger. This Arabidopsis thaliana (Mouse-ear cress) protein is Calcium-dependent protein kinase 27 (CPK27).